A 95-amino-acid polypeptide reads, in one-letter code: Aspartyl/glutamyl-tRNA(Asn/Gln) amidotransferase subunit C (95 aa).

The protein belongs to the GatC family. As to quaternary structure, heterotrimer of A, B and C subunits.

It carries out the reaction L-glutamyl-tRNA(Gln) + L-glutamine + ATP + H2O = L-glutaminyl-tRNA(Gln) + L-glutamate + ADP + phosphate + H(+). The catalysed reaction is L-aspartyl-tRNA(Asn) + L-glutamine + ATP + H2O = L-asparaginyl-tRNA(Asn) + L-glutamate + ADP + phosphate + 2 H(+). In terms of biological role, allows the formation of correctly charged Asn-tRNA(Asn) or Gln-tRNA(Gln) through the transamidation of misacylated Asp-tRNA(Asn) or Glu-tRNA(Gln) in organisms which lack either or both of asparaginyl-tRNA or glutaminyl-tRNA synthetases. The reaction takes place in the presence of glutamine and ATP through an activated phospho-Asp-tRNA(Asn) or phospho-Glu-tRNA(Gln). This chain is Aspartyl/glutamyl-tRNA(Asn/Gln) amidotransferase subunit C, found in Azorhizobium caulinodans (strain ATCC 43989 / DSM 5975 / JCM 20966 / LMG 6465 / NBRC 14845 / NCIMB 13405 / ORS 571).